The primary structure comprises 254 residues: MGRGRVQLKRIENKINRQVTFSKRRAGLLKKAHEISVLCDAEVALVVFSHKGKLFEYSTDSCMEKILERYERYSYAERQLIAPESDVNTNWSMEYNRLKAKIELLERNQRHYLGEDLQAMSSKELQNLEQQLDTALKHIRSRKNQLMHDSINELQRKEKAIQEQNSMLSKQIKEREKILRAQQEQWDQQNHGHNMPPPPPPQQIQHPYMLSHQPSPFLNMGGLYQEEDPMEMRRNDLDLSLEPVYNCNLGCFAA.

An MADS-box domain is found at 3–57 (RGRVQLKRIENKINRQVTFSKRRAGLLKKAHEISVLCDAEVALVVFSHKGKLFEY). Residues 88–178 (NTNWSMEYNR…SKQIKEREKI (91 aa)) enclose the K-box domain.

It is found in the nucleus. Controls floral meristem identity. Is also required for normal development of sepals and petals. Is required for the transition of an influorescence meristem into a floral meristem. Interacts with LEAFY. This is Floral homeotic protein APETALA 1 (AP1) from Sinapis alba (White mustard).